The chain runs to 530 residues: Cytochrome P450 78A6 (530 aa).

Residues 25–45 traverse the membrane as a helical segment; the sequence is LAFSLLAVTIIWLAISLFLWT. Cysteine 474 lines the heme pocket.

This sequence belongs to the cytochrome P450 family. Requires heme as cofactor. In terms of tissue distribution, expressed in leaves, sepals, petals, stamens, carpels and developing ovules.

Its subcellular location is the membrane. In terms of biological role, plays a role in seed and fruit development. Functions probably in association with CYP78A9 in the regulation of seed growth. Acts maternally to promote seed growth. This chain is Cytochrome P450 78A6 (CYP78A6), found in Arabidopsis thaliana (Mouse-ear cress).